The following is a 307-amino-acid chain: Olfactory receptor 5AC1 (307 aa).

Topologically, residues 1–28 are extracellular; the sequence is MAEENKILVTHFVLTGLTDHPGLQAPLF. Residues 29-49 form a helical membrane-spanning segment; it reads LVFLVIYLITLVGNLGLMALI. Residues 50–56 are Cytoplasmic-facing; the sequence is WKDPHLH. A helical membrane pass occupies residues 57 to 77; that stretch reads TPIYLFLGSLAFADACTSSSV. The Extracellular portion of the chain corresponds to 78–99; it reads TSKMLINFLSKNHMLSMAKCAT. An intrachain disulfide couples Cys-97 to Cys-179. The chain crosses the membrane as a helical span at residues 100 to 120; sequence QFYFFGSNATTECFLLVVMAY. The Cytoplasmic segment spans residues 121–143; it reads DRYVAICNPLLYPVVMSNSLCTQ. A helical membrane pass occupies residues 144–164; the sequence is FIGISYFIGFLHSAIHVGLLF. Over 165–195 the chain is Extracellular; sequence RLTFCRSNIIHYFYCEILQLFKISCTNPTVN. The helical transmembrane segment at 196–216 threads the bilayer; the sequence is ILLIFIFSAFIQVFTFMTLIV. Residues 217–239 are Cytoplasmic-facing; that stretch reads SYSYILSAILKKKSEKGRSKAFS. Residues 240 to 260 traverse the membrane as a helical segment; it reads TCSAHLLSVSLFYGTLFFMYV. Over 261–271 the chain is Extracellular; sequence SSRSGSAADQA. Residues 272–292 form a helical membrane-spanning segment; it reads KMYSLFYTIIIPLLNPFIYSL. Residues 293–307 are Cytoplasmic-facing; that stretch reads RNKEVIDALRRIMKK.

This sequence belongs to the G-protein coupled receptor 1 family.

It is found in the cell membrane. Functionally, odorant receptor. This chain is Olfactory receptor 5AC1 (OR5AC1), found in Homo sapiens (Human).